The chain runs to 429 residues: MSSIVEIHGREVIDSRGNPTVEVDVYTEDGGFGRAAVPSGASTGSREAVELRDGDKSRFLGKGVRKAVDAVNTVLAEVVLGMEVADQKGIDAAMIALDGTHNKSRLGANAILGISMAVAKAAADECDLPLYRYLGGTNTSLLPVPMMNIINGGAHADNNVDIQEFMIMPVAATSCTEAIRMGAEVFHSLKKVLKSKGLNTAVGDEGGFAPNLGSNEEALKVIVEAIEAAGYKPGEDIKLALDCASSEFYNKETGNYDLTGEGRVLTKQELVAFYEDLVAKYPIISIEDGFDESDWDGWKLMTEALGNKIQLVGDDLFVTNSKILAEGISKGIANSILVKVNQIGTLTETFEAVEMAQRAGYTAVISHRSGETEDATIADIAVALNAGQIKTGSMSRSDRIAKYNQLIRIEEELGGMARFEGMKVFYNLR.

Q163 is a binding site for (2R)-2-phosphoglycerate. E205 (proton donor) is an active-site residue. Mg(2+) is bound by residues D242, E287, and D314. Residues K339, R368, S369, and K390 each coordinate (2R)-2-phosphoglycerate. K339 serves as the catalytic Proton acceptor.

It belongs to the enolase family. It depends on Mg(2+) as a cofactor.

Its subcellular location is the cytoplasm. The protein resides in the secreted. It is found in the cell surface. It carries out the reaction (2R)-2-phosphoglycerate = phosphoenolpyruvate + H2O. The protein operates within carbohydrate degradation; glycolysis; pyruvate from D-glyceraldehyde 3-phosphate: step 4/5. Its function is as follows. Catalyzes the reversible conversion of 2-phosphoglycerate (2-PG) into phosphoenolpyruvate (PEP). It is essential for the degradation of carbohydrates via glycolysis. This is Enolase from Magnetococcus marinus (strain ATCC BAA-1437 / JCM 17883 / MC-1).